Here is a 138-residue protein sequence, read N- to C-terminus: Small ribosomal subunit protein uS11c (138 aa).

Residues Met1 to Ala22 form a disordered region. A compositionally biased stretch (basic residues) spans Gly9 to Ala22.

It belongs to the universal ribosomal protein uS11 family. As to quaternary structure, part of the 30S ribosomal subunit.

It localises to the plastid. It is found in the chloroplast. This is Small ribosomal subunit protein uS11c from Populus alba (White poplar).